The following is a 203-amino-acid chain: Glycerol-3-phosphate acyltransferase (203 aa).

The next 4 helical transmembrane spans lie at 7–27 (TLLM…VLVC), 82–102 (AVSL…PVFF), 118–138 (APIG…LLLI), and 141–161 (YSSL…WWLD).

This sequence belongs to the PlsY family. As to quaternary structure, probably interacts with PlsX.

Its subcellular location is the cell inner membrane. It catalyses the reaction an acyl phosphate + sn-glycerol 3-phosphate = a 1-acyl-sn-glycero-3-phosphate + phosphate. The protein operates within lipid metabolism; phospholipid metabolism. Functionally, catalyzes the transfer of an acyl group from acyl-phosphate (acyl-PO(4)) to glycerol-3-phosphate (G3P) to form lysophosphatidic acid (LPA). This enzyme utilizes acyl-phosphate as fatty acyl donor, but not acyl-CoA or acyl-ACP. In Shewanella baltica (strain OS223), this protein is Glycerol-3-phosphate acyltransferase.